The primary structure comprises 135 residues: Interleukin-4 (135 aa).

A signal peptide spans 1–24; the sequence is MGLTSQLIPVLVCLLACTSHFVHG. 3 cysteine pairs are disulfide-bonded: C27–C135, C48–C85, and C70–C105. N62 and N96 each carry an N-linked (GlcNAc...) asparagine glycan.

The protein belongs to the IL-4/IL-13 family.

The protein resides in the secreted. Its function is as follows. Participates in at least several B-cell activation processes as well as of other cell types. It is a costimulator of DNA-synthesis. It induces the expression of class II MHC molecules on resting B-cells. It enhances both secretion and cell surface expression of IgE and IgG1. It also regulates the expression of the low affinity Fc receptor for IgE (CD23) on both lymphocytes and monocytes. Positively regulates IL31RA expression in macrophages. Stimulates autophagy in dendritic cells by interfering with mTORC1 signaling and through the induction of RUFY4. The polypeptide is Interleukin-4 (IL4) (Cervus elaphus (Red deer)).